Consider the following 570-residue polypeptide: Urease subunit alpha (570 aa).

The region spanning 135 to 570 (GGLDIHIHFN…ELPLAKRYSL (436 aa)) is the Urease domain. Ni(2+) is bound by residues histidine 140, histidine 142, and lysine 219. An N6-carboxylysine modification is found at lysine 219. Residue histidine 221 coordinates substrate. Histidine 248 and histidine 274 together coordinate Ni(2+). Histidine 322 acts as the Proton donor in catalysis. Ni(2+) is bound at residue aspartate 362.

Belongs to the metallo-dependent hydrolases superfamily. Urease alpha subunit family. Heterotrimer of UreA (gamma), UreB (beta) and UreC (alpha) subunits. Three heterotrimers associate to form the active enzyme. It depends on Ni cation as a cofactor. In terms of processing, carboxylation allows a single lysine to coordinate two nickel ions.

The protein resides in the cytoplasm. The catalysed reaction is urea + 2 H2O + H(+) = hydrogencarbonate + 2 NH4(+). It functions in the pathway nitrogen metabolism; urea degradation; CO(2) and NH(3) from urea (urease route): step 1/1. The sequence is that of Urease subunit alpha from Haloquadratum walsbyi (strain DSM 16790 / HBSQ001).